Here is a 190-residue protein sequence, read N- to C-terminus: Capsid protein (190 aa).

The interval 1–20 (MTTSATGKALNRKQRRALNR) is disordered.

This sequence belongs to the bromovirus capsid protein family.

The protein localises to the virion. Functionally, capsid protein. Probably binds RNA and plays a role in packaging. The protein is Capsid protein of Broad bean mottle virus.